Here is a 730-residue protein sequence, read N- to C-terminus: Matrix metalloproteinase-9 (730 aa).

The signal sequence occupies residues 1–19; sequence MSPWQPLLLALLAFGCSSA. Positions 20-107 are cleaved as a propeptide — activation peptide; it reads APYQRQPTFV…PRCGVPDVGR (88 aa). N39 carries an N-linked (GlcNAc...) asparagine glycan. The Cysteine switch signature appears at 98–105; it reads PRCGVPDV. C100 lines the Zn(2+) pocket. Residues N120 and N127 are each glycosylated (N-linked (GlcNAc...) asparagine). Ca(2+) contacts are provided by D131 and D165. H175 and D177 together coordinate Zn(2+). Ca(2+) contacts are provided by D182, G183, D185, and L187. Zn(2+) is bound at residue H190. The Ca(2+) site is built by G197, Q199, and D201. H203 serves as a coordination point for Zn(2+). Ca(2+) contacts are provided by D205, D206, and E208. 3 Fibronectin type-II domains span residues 225 to 273, 283 to 331, and 342 to 390; these read SNGA…FCPS, GEGK…FCPT, and SAGE…FCPD. Disulfide bonds link C230–C256, C244–C271, C288–C314, C302–C329, C347–C373, and C361–C388. Residue H401 coordinates Zn(2+). Residue E402 is part of the active site. Positions 405 and 411 each coordinate Zn(2+). Residues 442–529 are disordered; sequence LYGRGSKPDP…SEASTESLSP (88 aa). A compositionally biased stretch (pro residues) spans 463 to 477; it reads PTAPPTMCPTIPPTA. The segment covering 478 to 489 has biased composition (low complexity); sequence YPTVGPTVGPTG. Residues 490 to 514 show a composition bias toward pro residues; sequence APSPGPTSSPSPGPTGAPSPGPTAP. A disulfide bridge links C534 with C729. Hemopexin repeat units lie at residues 536–581, 582–626, 628–675, and 676–729; these read VDVF…WPAL, PATL…GLGP, VTHV…FSGV, and PWNS…LLQC.

The protein belongs to the peptidase M10A family. Exists as monomer or homodimer; disulfide-linked. Also exists as heterodimer with LCN2. Macrophages and transformed cell lines produce only the monomeric form. Interacts with ECM1. Requires Zn(2+) as cofactor. Ca(2+) serves as cofactor. In terms of processing, N- and O-glycosylated.

The protein resides in the secreted. Its subcellular location is the extracellular space. It localises to the extracellular matrix. The catalysed reaction is Cleavage of gelatin types I and V and collagen types IV and V.. Inhibited by histatin-3 1/24 (histatin-5). Inhibited by ECM1. Matrix metalloproteinase that plays an essential role in local proteolysis of the extracellular matrix and in leukocyte migration. Could play a role in bone osteoclastic resorption. Cleaves KiSS1 at a Gly-|-Leu bond. Cleaves NINJ1 to generate the Secreted ninjurin-1 form. Cleaves type IV and type V collagen into large C-terminal three quarter fragments and shorter N-terminal one quarter fragments. Degrades fibronectin but not laminin or Pz-peptide. The polypeptide is Matrix metalloproteinase-9 (Mmp9) (Mus musculus (Mouse)).